We begin with the raw amino-acid sequence, 732 residues long: Formin-homology and zinc finger domains protein 1 (732 aa).

4 stretches are compositionally biased toward low complexity: residues 1–12 (MMLASSAPTAPS), 19–45 (QPSAATTRADDCSSSTSPTNTSASDAS), 121–137 (QQQQQQNQNPSQSQSSS), and 240–251 (SSPKSPTSPTQP). Residues 1–27 (MMLASSAPTAPSLLPPSSQPSAATTRA) form the signal peptide. 3 disordered regions span residues 1–45 (MMLA…SDAS), 121–141 (QQQQQQNQNPSQSQSSSSDRK), and 232–267 (RGRPMQGRSSPKSPTSPTQPGRRGSQASSLPSRRNT). The segment covering 256-267 (SQASSLPSRRNT) has biased composition (polar residues). Positions 355–732 (PISLSSSIIP…DDHHINVSSP (378 aa)) constitute an FH2 domain.

Belongs to the formin homology family. In terms of tissue distribution, transiently expressed in all mesoderm derived progenitor body wall muscle cells before they differentiate.

Acts redundantly with hlh-1 to promote body wall muscle cell and coelomocyte specification in postembryonic mesoderm progenitors, probably through suppression of sem-2. This chain is Formin-homology and zinc finger domains protein 1, found in Caenorhabditis elegans.